A 683-amino-acid polypeptide reads, in one-letter code: Multidrug resistance protein MdtO (683 aa).

A run of 9 helical transmembrane segments spans residues 43 to 63 (VILI…AVLF), 75 to 95 (FVAI…FLIY), 100 to 120 (GEPL…MFLM), 125 to 145 (LGLV…FPAM), 158 to 178 (WCIV…VLWF), 402 to 422 (FGGA…VMPW), 426 to 446 (IVEL…IATS), 457 to 477 (MVVT…YDLV), and 483 to 503 (ALGI…VWPE).

The protein belongs to the MdtO family. As to quaternary structure, could be part of a tripartite efflux system composed of MdtN, MdtO and MdtP.

It localises to the cell inner membrane. Its function is as follows. Could be involved in resistance to puromycin, acriflavine and tetraphenylarsonium chloride. In Escherichia coli (strain K12), this protein is Multidrug resistance protein MdtO (mdtO).